Consider the following 204-residue polypeptide: Large ribosomal subunit protein eL15z (204 aa).

Belongs to the eukaryotic ribosomal protein eL15 family.

The protein is Large ribosomal subunit protein eL15z (SB61) of Picea mariana (Black spruce).